The following is a 92-amino-acid chain: Evasin P942 (92 aa).

Residues 1–26 (MEVKTFAFLQIAVLIALGLHLAPAGS) form the signal peptide. 3 disulfide bridges follow: Cys-44-Cys-63, Cys-48-Cys-65, and Cys-59-Cys-76. The N-linked (GlcNAc...) asparagine glycan is linked to Asn-47. A glycan (N-linked (GlcNAc...) asparagine) is linked at Asn-70.

The protein localises to the secreted. Functionally, salivary chemokine-binding protein which binds to host chemokines CXCL1, CXCL2, CXCL3, CXCL4, CXCL5, CXCL6, CXCL10, CXCL11 and CXCL13. The chain is Evasin P942 from Ixodes ricinus (Common tick).